Reading from the N-terminus, the 428-residue chain is Serine--tRNA ligase (428 aa).

235-237 contacts L-serine; the sequence is TAE. ATP is bound at residue 266–268; sequence RSE. Glutamate 289 provides a ligand contact to L-serine. 353 to 356 serves as a coordination point for ATP; sequence EISS. Serine 389 is an L-serine binding site.

This sequence belongs to the class-II aminoacyl-tRNA synthetase family. Type-1 seryl-tRNA synthetase subfamily. In terms of assembly, homodimer. The tRNA molecule binds across the dimer.

It is found in the cytoplasm. The catalysed reaction is tRNA(Ser) + L-serine + ATP = L-seryl-tRNA(Ser) + AMP + diphosphate + H(+). It carries out the reaction tRNA(Sec) + L-serine + ATP = L-seryl-tRNA(Sec) + AMP + diphosphate + H(+). Its pathway is aminoacyl-tRNA biosynthesis; selenocysteinyl-tRNA(Sec) biosynthesis; L-seryl-tRNA(Sec) from L-serine and tRNA(Sec): step 1/1. In terms of biological role, catalyzes the attachment of serine to tRNA(Ser). Is also able to aminoacylate tRNA(Sec) with serine, to form the misacylated tRNA L-seryl-tRNA(Sec), which will be further converted into selenocysteinyl-tRNA(Sec). This chain is Serine--tRNA ligase, found in Shewanella halifaxensis (strain HAW-EB4).